Here is a 69-residue protein sequence, read N- to C-terminus: DNA-directed RNA polymerase subunit omega (69 aa).

Belongs to the RNA polymerase subunit omega family. As to quaternary structure, the RNAP catalytic core consists of 2 alpha, 1 beta, 1 beta' and 1 omega subunit. When a sigma factor is associated with the core the holoenzyme is formed, which can initiate transcription.

The catalysed reaction is RNA(n) + a ribonucleoside 5'-triphosphate = RNA(n+1) + diphosphate. In terms of biological role, promotes RNA polymerase assembly. Latches the N- and C-terminal regions of the beta' subunit thereby facilitating its interaction with the beta and alpha subunits. The protein is DNA-directed RNA polymerase subunit omega of Hahella chejuensis (strain KCTC 2396).